The primary structure comprises 261 residues: Chitinase 8 (261 aa).

The N-terminal stretch at 1 to 29 (MTTTTTRFVQLAACAAASLLAVAASGAAA) is a signal peptide. 2 disulfide bridges follow: cysteine 53/cysteine 115 and cysteine 221/cysteine 253. The active-site Proton donor is the glutamate 98.

This sequence belongs to the glycosyl hydrolase 19 family. Chitinase class II subfamily. As to expression, expressed in roots, leaves, sheaths and meristems.

It catalyses the reaction Random endo-hydrolysis of N-acetyl-beta-D-glucosaminide (1-&gt;4)-beta-linkages in chitin and chitodextrins.. The chain is Chitinase 8 (Cht8) from Oryza sativa subsp. japonica (Rice).